The primary structure comprises 99 residues: Class II hydrophobin 2 (99 aa).

The first 15 residues, 1-15 (MKFFVVAALFAGALA), serve as a signal peptide directing secretion. Disulfide bonds link cysteine 30-cysteine 79 and cysteine 40-cysteine 70.

Belongs to the cerato-ulmin hydrophobin family. Homotetramer. Further self-assembles to form highly ordered films at water-air interfaces through intermolecular interactions.

Its subcellular location is the secreted. The protein resides in the cell wall. In terms of biological role, aerial growth, conidiation, and dispersal of filamentous fungi in the environment rely upon a capability of their secreting small amphipathic proteins called hydrophobins (HPBs) with low sequence identity. Class I can self-assemble into an outermost layer of rodlet bundles on aerial cell surfaces, conferring cellular hydrophobicity that supports fungal growth, development and dispersal; whereas Class II form highly ordered films at water-air interfaces through intermolecular interactions but contribute nothing to the rodlet structure. HYD2 is a class II hydrophobin that contributes to the fruiting body development. This chain is Class II hydrophobin 2, found in Cordyceps militaris (Caterpillar fungus).